Consider the following 347-residue polypeptide: Cytoplasmic tRNA 2-thiolation protein 1 (347 aa).

S200 is modified (phosphoserine). The segment at 315-347 (LAIGKGRRGLDEEGPPREPQPSRPLTSEPVPDF) is disordered.

Belongs to the TtcA family. CTU1/NCS6/ATPBD3 subfamily. In terms of assembly, component of a complex at least composed of URM1, CTU2/NCS2 and CTU1/ATPBD3. May form a heterodimer with CTU2/NCS2.

The protein resides in the cytoplasm. It participates in tRNA modification; 5-methoxycarbonylmethyl-2-thiouridine-tRNA biosynthesis. Its function is as follows. Plays a central role in 2-thiolation of mcm(5)S(2)U at tRNA wobble positions of tRNA(Lys), tRNA(Glu) and tRNA(Gln). Directly binds tRNAs and probably acts by catalyzing adenylation of tRNAs, an intermediate required for 2-thiolation. It is unclear whether it acts as a sulfurtransferase that transfers sulfur from thiocarboxylated URM1 onto the uridine of tRNAs at wobble position. This Bos taurus (Bovine) protein is Cytoplasmic tRNA 2-thiolation protein 1.